The primary structure comprises 103 residues: MASETMGIALGMIETRGLVPAIEAADAMTKAAEVRLIGREFVGGGYVTVLVRGETGAVNAAVRAGADACERVGDGLVAAHIIARPHREVEPALGNGNFLGQKD.

Positions 9-94 (ALGMIETRGL…PHREVEPALG (86 aa)) constitute a BMC domain.

Belongs to the bacterial microcompartments protein family. CsoS1 subfamily. In terms of assembly, homohexamer with a small central pore. Forms a CsoS2-CsoS1-RuBisCO complex.

The protein localises to the carboxysome. Functionally, one of the shell proteins of the carboxysome, a polyhedral inclusion where RuBisCO (ribulose bisphosphate carboxylase, ccbL-ccbS) is sequestered. Assembles into hexamers which make sheets that form the facets of the polyhedral carboxysome. The protein is Carboxysome shell protein CsoS1 of Prochlorococcus marinus (strain MIT 9313).